Reading from the N-terminus, the 1025-residue chain is MKRGFSSGDLSSEVDDVDPNSLPPAARPIQDQPTKPPVAGGPPNMPPPPAPGQPAGAAPELSLSFGAGKTPATAAPAPPRGVSAPTSPAKSRESLLQRVQSLTGAARDQGASILGAAVQSATQRAPAFSKDKYFTLLVLDDQNTDWSKYFRGRRLHGDFDIRVEQAEFRDITVVSSADTGPVVTMAAYRSGTRVARSFRPDFVLIRQPPRDGSSDYRSTILGLKYGGVPSINSLHSIYQFQDKPWVFSHLLQLQRRLGRDGFPLIEQTFFPNPRDLFQFTKFPSVLKAGHCHGGVATARLENQSALQDAAGLVSGAGNDSHCYCTIEPYIDAKFSVHIQKIGNNYKAFMRKSITGNWKTNQGSAMLEQITLTEKYKSWVDEISELFGGMEVCGLSVVVAKDGREYIISACDSTFALIGDTQEEDRRQIADLVSGRMQNVCRPSMAQTGPGKLPSRSSVSSRAESPTDEGVAPTPPLPAGPRPAPMGGPPPIPERTSPAVGSIGRLSSRSSISEVPEEPSSSGPSTVGGVRRDSQTSQSSTISSSVSRAGQRPPQTQNSVVEDAEDTMKNLRKTFAGIFGDMXEIANKKRGRTASETSSGSGPGSVPSSAGPGSGFSSSFLGKQFSFAGKGEGVISTQPTQRPSEEPPAIPTTASSAVRPESSVSVSDSRNTDTLTERAGAGYQPVTNYEQQERVNPFDKEPSKSGSAASIHTSSSSSISSSSISSRINRNGNAIQSPPPPAGPPPPPPTNVTAVGSNANSSSGYRNSFSSSLSKDKTSYGNYGSTTSVETITRMDTNTTNIGATATEAGEASGVTAITNISNSDGIVAPTTGTITTSVTTNDWRSAIGMRSASVYSAPAAVTTVLPGDTSGYDSNSIASQGEGLNNPSDLPSYTRPSYSRSESNASKHSDLDVIFGDSKTTPASYGNGKYTRAAGSISDADMIFGGPPSNYKTDRFGASKSMSMTSGGVGSGNGSGSGLGGYKIYDSIQNAAFSDFSDSGSMSSIGSHTKRWSASKEEDDELDLK.

Disordered regions lie at residues 1-94 (MKRG…SRES), 439-784 (VCRP…NYGS), 872-910 (YDSNSIASQGEGLNNPSDLPSYTRPSYSRSESNASKHSD), and 995-1025 (DFSDSGSMSSIGSHTKRWSASKEEDDELDLK). Positions 34 to 52 (TKPPVAGGPPNMPPPPAPG) are enriched in pro residues. Residues 454–463 (SRSSVSSRAE) show a composition bias toward low complexity. Over residues 472 to 492 (PTPPLPAGPRPAPMGGPPPIP) the composition is skewed to pro residues. Composition is skewed to low complexity over residues 499-546 (VGSI…SSVS) and 594-626 (SETSSGSGPGSVPSSAGPGSGFSSSFLGKQFSF). The residue at position 539 (serine 539) is a Phosphoserine. A compositionally biased stretch (polar residues) spans 651–673 (TTASSAVRPESSVSVSDSRNTDT). Basic and acidic residues predominate over residues 690–702 (QQERVNPFDKEPS). Residues 703-725 (KSGSAASIHTSSSSSISSSSISS) are compositionally biased toward low complexity. Residues 726–735 (RINRNGNAIQ) show a composition bias toward polar residues. A compositionally biased stretch (pro residues) spans 736–749 (SPPPPAGPPPPPPT). Positions 750-759 (NVTAVGSNAN) are enriched in polar residues. Over residues 760-772 (SSSGYRNSFSSSL) the composition is skewed to low complexity. The segment covering 872–904 (YDSNSIASQGEGLNNPSDLPSYTRPSYSRSESN) has biased composition (polar residues). Positions 995–1007 (DFSDSGSMSSIGS) are enriched in low complexity.

The protein belongs to the synapsin family. Identified in a complex with Syt1 and nwk. In terms of tissue distribution, widely expressed in the embryonic and adult nervous system synaptic terminals.

The protein localises to the synapse. Plays a significant role in nervous system function, which is subtle at the cellular level but manifests itself in complex behavior. The polypeptide is Synapsin (Syn) (Drosophila melanogaster (Fruit fly)).